We begin with the raw amino-acid sequence, 487 residues long: Glutamyl-tRNA(Gln) amidotransferase subunit A (487 aa).

Active-site charge relay system residues include Lys-77 and Ser-152. Ser-176 acts as the Acyl-ester intermediate in catalysis.

The protein belongs to the amidase family. GatA subfamily. As to quaternary structure, heterotrimer of A, B and C subunits.

It catalyses the reaction L-glutamyl-tRNA(Gln) + L-glutamine + ATP + H2O = L-glutaminyl-tRNA(Gln) + L-glutamate + ADP + phosphate + H(+). Functionally, allows the formation of correctly charged Gln-tRNA(Gln) through the transamidation of misacylated Glu-tRNA(Gln) in organisms which lack glutaminyl-tRNA synthetase. The reaction takes place in the presence of glutamine and ATP through an activated gamma-phospho-Glu-tRNA(Gln). This Limosilactobacillus fermentum (strain NBRC 3956 / LMG 18251) (Lactobacillus fermentum) protein is Glutamyl-tRNA(Gln) amidotransferase subunit A.